Here is a 338-residue protein sequence, read N- to C-terminus: Tetraacyldisaccharide 4'-kinase (338 aa).

Residue 67–74 (IAGGAGKT) participates in ATP binding.

This sequence belongs to the LpxK family.

The enzyme catalyses a lipid A disaccharide + ATP = a lipid IVA + ADP + H(+). It functions in the pathway glycolipid biosynthesis; lipid IV(A) biosynthesis; lipid IV(A) from (3R)-3-hydroxytetradecanoyl-[acyl-carrier-protein] and UDP-N-acetyl-alpha-D-glucosamine: step 6/6. In terms of biological role, transfers the gamma-phosphate of ATP to the 4'-position of a tetraacyldisaccharide 1-phosphate intermediate (termed DS-1-P) to form tetraacyldisaccharide 1,4'-bis-phosphate (lipid IVA). The protein is Tetraacyldisaccharide 4'-kinase of Acidovorax sp. (strain JS42).